We begin with the raw amino-acid sequence, 2200 residues long: Bromodomain and WD repeat-containing DDB_G0285837 (2200 aa).

3 disordered regions span residues 137–178 (GFND…SNTN), 194–245 (VTPT…TTPP), and 259–288 (DIQQ…NNNN). Low complexity-rich tracts occupy residues 161–176 (NNNN…SNSN), 203–242 (NTTN…TTLT), and 259–273 (DIQQ…QQQQ). WD repeat units lie at residues 352 to 391 (GHKA…LIAT), 394 to 433 (GHLG…YDSI), 442 to 483 (SVNN…HVIS), 548 to 586 (GKTN…PKLV), 591 to 630 (GHPT…KWDH), 653 to 691 (RSKA…FHLE), 694 to 736 (EHTS…KKFV), and 741 to 780 (GFQC…DINN). Composition is skewed to acidic residues over residues 918–933 (DDEI…EDFN) and 955–968 (QDDD…EDYD). 4 disordered regions span residues 918 to 1180 (DDEI…NHLT), 1262 to 1297 (NNNN…DDDD), 1461 to 1538 (ENNQ…NNNN), and 1662 to 1703 (NFNS…NNNN). The span at 974 to 1000 (MSTRKKSKIKADKRKKRLLKQSKKFTR) shows a compositional bias: basic residues. The span at 1052–1074 (GEIEMDDDDQYLNDNILDSDDND) shows a compositional bias: acidic residues. Residues 1109–1132 (SSDNSSENDSSANGSDSDYSGSKS) are compositionally biased toward low complexity. A compositionally biased stretch (basic residues) spans 1133 to 1164 (NKNKRGDKSKRNKKGKKNVKNKKVQKRGRKKS). 2 stretches are compositionally biased toward low complexity: residues 1262–1292 (NNNN…QQIN) and 1461–1525 (ENNQ…NSLN). Residues 1722–1823 (EKIENLKKEM…HRISDILKEA (102 aa)) form the Bromo domain. The segment at 1850 to 2200 (DKDDSQLDDE…RGRGRPPKSN (351 aa)) is disordered. A compositionally biased stretch (low complexity) spans 1878–1888 (LANNNHGNNKS). Polar residues predominate over residues 1910 to 1920 (TGKNITRSLLS). Positions 1945 to 1958 (TTTTTTTTTTTSST) are enriched in low complexity. Composition is skewed to acidic residues over residues 2016-2028 (DYND…DNDG), 2057-2073 (EDED…EEDY), and 2104-2113 (SEEEEDEDQS). Residues 2114–2124 (DVNSNNNSDNE) are compositionally biased toward low complexity. The segment covering 2125-2138 (SGGEDGYSGEDGSE) has biased composition (acidic residues). Positions 2170–2185 (SFKNNNNNNNINNNVN) are enriched in low complexity. Basic residues predominate over residues 2190–2200 (KRGRGRPPKSN).

This chain is Bromodomain and WD repeat-containing DDB_G0285837, found in Dictyostelium discoideum (Social amoeba).